The primary structure comprises 158 residues: Deoxyuridine 5'-triphosphate nucleotidohydrolase (158 aa).

Substrate-binding positions include 75-77, N88, 92-94, and K102; these read RSG and TVD.

Belongs to the dUTPase family. It depends on Mg(2+) as a cofactor.

It catalyses the reaction dUTP + H2O = dUMP + diphosphate + H(+). It functions in the pathway pyrimidine metabolism; dUMP biosynthesis; dUMP from dCTP (dUTP route): step 2/2. In terms of biological role, this enzyme is involved in nucleotide metabolism: it produces dUMP, the immediate precursor of thymidine nucleotides and it decreases the intracellular concentration of dUTP so that uracil cannot be incorporated into DNA. This chain is Deoxyuridine 5'-triphosphate nucleotidohydrolase, found in Bifidobacterium longum (strain DJO10A).